The following is a 1503-amino-acid chain: E3 ubiquitin-protein ligase listerin (1503 aa).

HEAT repeat units lie at residues S52 to S89, C93 to K129, K133 to K170, L280 to F318, S323 to V345, L346 to W384, G552 to S589, A640 to E663, K664 to S700, L845 to S882, T1022 to R1065, R1078 to E1117, A1141 to S1183, and F1302 to I1340. The RING-type zinc-finger motif lies at C1446–R1499.

It belongs to the LTN1 family. Component of the ribosome quality control complex (RQC), composed of at least the E3 ubiquitin ligase ltn1 and nemf. The complex probably also contains tcf25 as well as vcp/p97 and its ubiquitin-binding cofactors. RQC forms a stable complex with 60S ribosomal subunits.

The protein resides in the cytoplasm. Its subcellular location is the cytosol. The catalysed reaction is S-ubiquitinyl-[E2 ubiquitin-conjugating enzyme]-L-cysteine + [acceptor protein]-L-lysine = [E2 ubiquitin-conjugating enzyme]-L-cysteine + N(6)-ubiquitinyl-[acceptor protein]-L-lysine.. The protein operates within protein modification; protein ubiquitination. Functionally, E3 ubiquitin-protein ligase. Component of the ribosome quality control complex (RQC), a ribosome-associated complex that mediates ubiquitination and extraction of incompletely synthesized nascent chains for proteasomal degradation. Ubiquitination leads to vcp/p97 recruitment for extraction and degradation of the incomplete translation product. This chain is E3 ubiquitin-protein ligase listerin, found in Caenorhabditis briggsae.